The chain runs to 314 residues: MPRISTSLIRKASRIRPGLHLLLPECRTLEQAKLEYKWLTEELPPDKSIRWACLQRYKHVPLQYILRSQPFGALDIVCKPGVLIPRWETEEWVMAIIRALNNSMLSRHTIPLHICDTFTGTGCIALALSHGIANCTFTAIDVSTRAIKLVKENMLKNKVSGGKLVQHNILSSKASDEYPSHIDILTGNPPYIRKRDFNRDVKTSVKLFEPRLALVGELECYINLVNYWLPKTDSFFYEIGDVEQFNYVERRIKEDSYLSRIWSIGLKYDSNGKARVVYGFKATPKGRILHQIFASFGTIRHLATALSGHKANCN.

S-adenosyl-L-methionine contacts are provided by residues 118–122 (FTGTG), aspartate 141, and asparagine 188. Residue 188–191 (NPPY) coordinates substrate.

The protein belongs to the protein N5-glutamine methyltransferase family.

It is found in the mitochondrion. It carries out the reaction L-glutaminyl-[peptide chain release factor] + S-adenosyl-L-methionine = N(5)-methyl-L-glutaminyl-[peptide chain release factor] + S-adenosyl-L-homocysteine + H(+). Functionally, methylates MRF1 on 'Gln-287' using S-adenosyl L-methionine as methyl donor. This chain is Mitochondrial MRF1 N(5)-glutamine methyltransferase MTQ1 (MTQ1), found in Saccharomyces cerevisiae (strain ATCC 204508 / S288c) (Baker's yeast).